Reading from the N-terminus, the 248-residue chain is 2,3-bisphosphoglycerate-dependent phosphoglycerate mutase (248 aa).

Substrate contacts are provided by residues 10–17, 23–24, Arg62, 89–92, Lys100, 116–117, and 183–184; these read RHGQSQWN, TG, ERHY, RR, and GN. Catalysis depends on His11, which acts as the Tele-phosphohistidine intermediate. The active-site Proton donor/acceptor is the Glu89.

It belongs to the phosphoglycerate mutase family. BPG-dependent PGAM subfamily.

It carries out the reaction (2R)-2-phosphoglycerate = (2R)-3-phosphoglycerate. Its pathway is carbohydrate degradation; glycolysis; pyruvate from D-glyceraldehyde 3-phosphate: step 3/5. In terms of biological role, catalyzes the interconversion of 2-phosphoglycerate and 3-phosphoglycerate. The protein is 2,3-bisphosphoglycerate-dependent phosphoglycerate mutase of Corynebacterium kroppenstedtii (strain DSM 44385 / JCM 11950 / CIP 105744 / CCUG 35717).